The sequence spans 537 residues: Tyrosine-protein kinase Fyn (537 aa).

Gly2 carries the N-myristoyl glycine lipid modification. S-palmitoyl cysteine attachment occurs at residues Cys3 and Cys6. Thr12 is modified (phosphothreonine; by PKC). Residues Leu14 to Thr35 form a disordered region. Residues Ser21 and Ser26 each carry the phosphoserine modification. The SH3 domain maps to Thr82–Ser143. The region spanning Trp149–Cys246 is the SH2 domain. Tyr185 carries the post-translational modification Phosphotyrosine. The 254-residue stretch at Leu271–Phe524 folds into the Protein kinase domain. ATP-binding positions include Leu277–Val285 and Lys299. Asp390 acts as the Proton acceptor in catalysis. Tyr420 is modified (phosphotyrosine; by autocatalysis). Residue Tyr531 is modified to Phosphotyrosine; by CSK.

This sequence belongs to the protein kinase superfamily. Tyr protein kinase family. SRC subfamily. Interacts (via its SH3 domain) with PIK3R1 and PRMT8. Interacts with FYB1, PAG1, and SH2D1A. Interacts with CD79A (tyrosine-phosphorylated form); the interaction increases FYN activity. Interacts (via SH2 domain) with CSF1R (tyrosine phosphorylated). Interacts with TOM1L1 (phosphorylated form). Interacts with KDR (tyrosine phosphorylated). Interacts (via SH3 domain) with KLHL2 (via N-terminus). Interacts with SH2D1A and SLAMF1. Interacts with ITCH; the interaction phosphorylates ITCH and negatively regulates its activity. Interacts with FASLG. Interacts with RUNX3. Interacts with KIT. Interacts with EPHA8; possible downstream effector of EPHA8 in regulation of cell adhesion. Interacts with PTK2/FAK1; this interaction leads to PTK2/FAK1 phosphorylation and activation. Interacts with CAV1; this interaction couples integrins to the Ras-ERK pathway. Interacts with UNC119. Interacts (via SH2 domain) with PTPRH (phosphorylated form). Interacts with PTPRO (phosphorylated form). Interacts with PTPRB (phosphorylated form). Interacts with FYB2. Interacts with DSCAM. Interacts with SKAP1 and FYB1; this interaction promotes the phosphorylation of CLNK. Interacts with NEDD9; in the presence of PTK2. As to quaternary structure, (Microbial infection) Interacts (via its SH3 domain) with hepatitis E virus/HEV protein ORF3. The cofactor is Mn(2+). Post-translationally, autophosphorylated at Tyr-420. Phosphorylation on the C-terminal tail at Tyr-531 by CSK maintains the enzyme in an inactive state. PTPRC/CD45 dephosphorylates Tyr-531 leading to activation. Ultraviolet B (UVB) strongly increase phosphorylation at Thr-12 and kinase activity, and promotes translocation from the cytoplasm to the nucleus. Dephosphorylation at Tyr-420 by PTPN2 negatively regulates T-cell receptor signaling. Phosphorylated at tyrosine residues, which can be enhanced by NTN1. Palmitoylated. Palmitoylation at Cys-3 and Cys-6, probably by ZDHHC21, regulates subcellular location. As to expression, isoform 1 is highly expressed in the brain. Isoform 2 is expressed in cells of hemopoietic lineages, especially T-lymphocytes.

Its subcellular location is the cytoplasm. It localises to the nucleus. It is found in the cell membrane. The protein resides in the perikaryon. It carries out the reaction L-tyrosyl-[protein] + ATP = O-phospho-L-tyrosyl-[protein] + ADP + H(+). Inhibited by phosphorylation of Tyr-531 by leukocyte common antigen and activated by dephosphorylation of this site. Non-receptor tyrosine-protein kinase that plays a role in many biological processes including regulation of cell growth and survival, cell adhesion, integrin-mediated signaling, cytoskeletal remodeling, cell motility, immune response and axon guidance. Inactive FYN is phosphorylated on its C-terminal tail within the catalytic domain. Following activation by PKA, the protein subsequently associates with PTK2/FAK1, allowing PTK2/FAK1 phosphorylation, activation and targeting to focal adhesions. Involved in the regulation of cell adhesion and motility through phosphorylation of CTNNB1 (beta-catenin) and CTNND1 (delta-catenin). Regulates cytoskeletal remodeling by phosphorylating several proteins including the actin regulator WAS and the microtubule-associated proteins MAP2 and MAPT. Promotes cell survival by phosphorylating AGAP2/PIKE-A and preventing its apoptotic cleavage. Participates in signal transduction pathways that regulate the integrity of the glomerular slit diaphragm (an essential part of the glomerular filter of the kidney) by phosphorylating several slit diaphragm components including NPHS1, KIRREL1 and TRPC6. Plays a role in neural processes by phosphorylating DPYSL2, a multifunctional adapter protein within the central nervous system, ARHGAP32, a regulator for Rho family GTPases implicated in various neural functions, and SNCA, a small pre-synaptic protein. Involved in reelin signaling by mediating phosphorylation of DAB1 following reelin (RELN)-binding to its receptor. Participates in the downstream signaling pathways that lead to T-cell differentiation and proliferation following T-cell receptor (TCR) stimulation. Phosphorylates PTK2B/PYK2 in response to T-cell receptor activation. Also participates in negative feedback regulation of TCR signaling through phosphorylation of PAG1, thereby promoting interaction between PAG1 and CSK and recruitment of CSK to lipid rafts. CSK maintains LCK and FYN in an inactive form. Promotes CD28-induced phosphorylation of VAV1. In mast cells, phosphorylates CLNK after activation of immunoglobulin epsilon receptor signaling. Can also promote CD244-mediated NK cell activation. The protein is Tyrosine-protein kinase Fyn (FYN) of Homo sapiens (Human).